The sequence spans 500 residues: NAD(P)H-quinone oxidoreductase chain 4, chloroplastic (500 aa).

14 helical membrane passes run 4-24 (FPWL…IFFL), 37-57 (IGIC…FFQL), 87-107 (IGPI…AWPV), 113-130 (LFHF…GLFS), 134-154 (LLLF…LLSM), 167-187 (FILY…GMGL), 208-228 (ALEI…LPII), 242-262 (HYST…YGLI), 272-292 (AHSI…IYAA), 305-325 (IAYS…SITD), 330-350 (GAVL…FLAG), 386-406 (LALP…GIIT), 416-436 (VLIT…SLSM), and 462-482 (LFIS…PDFV).

The protein belongs to the complex I subunit 4 family.

It is found in the plastid. The protein localises to the chloroplast thylakoid membrane. The catalysed reaction is a plastoquinone + NADH + (n+1) H(+)(in) = a plastoquinol + NAD(+) + n H(+)(out). It carries out the reaction a plastoquinone + NADPH + (n+1) H(+)(in) = a plastoquinol + NADP(+) + n H(+)(out). The protein is NAD(P)H-quinone oxidoreductase chain 4, chloroplastic of Ceratophyllum demersum (Rigid hornwort).